Here is a 200-residue protein sequence, read N- to C-terminus: 3-isopropylmalate dehydratase small subunit (200 aa).

This sequence belongs to the LeuD family. LeuD type 1 subfamily. In terms of assembly, heterodimer of LeuC and LeuD.

It catalyses the reaction (2R,3S)-3-isopropylmalate = (2S)-2-isopropylmalate. It participates in amino-acid biosynthesis; L-leucine biosynthesis; L-leucine from 3-methyl-2-oxobutanoate: step 2/4. Catalyzes the isomerization between 2-isopropylmalate and 3-isopropylmalate, via the formation of 2-isopropylmaleate. The protein is 3-isopropylmalate dehydratase small subunit of Serratia proteamaculans (strain 568).